Consider the following 1189-residue polypeptide: MSAGGNARKSTGRPSYYYRLLRRPRLQRQRSRSRSRTRPARESPQERPGSRRSLPGSMSEKNPSMEPSASTPFRVTGFLSRRLKGSIKRTKSQPKLDRNHSFRHILPGFRSAAAAAADNERSHLMPRLKESRSHESLLSPSSAVEALDLSMEEEVIIKPVHSSILGQDYCFEVTTSSGSKCFSCRSAAERDKWMENLRRAVHPNKDNSRRVEHILKLWVIEAKDLPAKKKYLCELCLDDVLYARTTSKLKTDNVFWGEHFEFHNLPPLRTVTVHLYRETDKKKKKERNSYLGLVSLPAASVAGRQFVEKWYPVVTPNPKGGKGPGPMIRIKARYQTVSILPMEMYKEFAEHITNHYLGLCAALEPILSAKTKEEMASALVHILQSTGKVKDFLTDLMMSEVDRCGDNEHLIFRENTLATKAIEEYLKLVGQKYLQDALGEFIKALYESDENCEVDPSKCSSADLPEHQGNLKMCCELAFCKIINSYCVFPRELKEVFASWRQECSSRGRPDISERLISASLFLRFLCPAIMSPSLFNLLQEYPDDRTARTLTLIAKVTQNLANFAKFGSKEEYMSFMNQFLEHEWTNMQRFLLEISNPETLSNTAGFEGYIDLGRELSSLHSLLWEAVSQLDQSVVSKLGPLPRILRDVHTALSTPGSGQLPGTNDLASTPGSGSSSVSAGLQKMVIENDLSGLIDFTRLPSPTPENKDLFFVTRSSGVQPSPARSSSYSEANEPDLQMANGSKSLSMVDLQDARTLDGEAGSPVGPDALPADGQVPATQLLAGWPARAAPVSLAGLATVRRAVPTPTTPGTSEGAPGRPQLLAPLSFQNPVYQMAAGLPLSPRGLGDSGSEGHSSLSSHSNSEELAAAAKLGSFSTAAEELARRPGELARRQMSLTEKGGQPTVPRQNSAGPQRRIDQPPPPPPPPPPAPRGRTPPTLLSTLQYPRPSSGTLASASPDWAGPGTRLRQQSSSSKGDSPELKPRAMHKQGPSPVSPNALDRTAAWLLTMNAQLLEDEGLGPDPPHRDRLRSKEELSQAEKDLAVLQDKLRISTKKLEEYETLFKCQEETTQKLVLEYQARLEEGEERLRRQQEDKDIQMKGIISRLMSVEEELKKDHAEMQAAVDSKQKIIDAQEKRIASLDAANARLMSALTQLKERYSMQARNGVSPTNPTKLQITENGEFRNSSNC.

The disordered stretch occupies residues M1–V75. Positions L20–R38 are enriched in basic residues. Residues P39–G49 are compositionally biased toward basic and acidic residues. Polar residues predominate over residues S59–F73. Residues S101–H202 enclose the PH domain. The C2 domain maps to W193–Y311. Residues G387–I595 enclose the Ras-GAP domain. The tract at residues L646–L943 is necessary for interaction with AKT1. A compositionally biased stretch (polar residues) spans L653–A668. 2 disordered regions span residues L653–S679 and R715–Q738. Over residues S669–S679 the composition is skewed to low complexity. Polar residues predominate over residues R715–E731. S728 is subject to Phosphoserine; by MAP3K5 and RIPK1. The residue at position 747 (S747) is a Phosphoserine. Disordered regions lie at residues V804–L823, P843–E865, S895–A998, E1015–E1034, and A1163–C1189. Positions E852–E865 are enriched in low complexity. The span at Q919 to P931 shows a compositional bias: pro residues. Polar residues-rich tracts occupy residues L939–S955 and L967–G976. Phosphoserine is present on residues S978 and S995. Basic and acidic residues predominate over residues P1023–E1034. Positions H1025–Y1159 form a coiled coil.

On plasma membrane, exists in an inactive form complexed with TNFR1; in response to TNF-alpha, dissociates from TNFR1 complex, translocates to cytoplasm and forms part of an intracellular signaling complex comprising TRADD, RIPK1, TRAF2 and MAP3K5. Interacts with DAB1. Part of a cytoplasmic complex made of HIPK1, DAB2IP and MAP3K5 in response to TNF-alpha; this complex formation promotes MAP3K5-JNK activation and subsequent apoptosis. Interacts (via N-terminal domain) with JAK2; the interaction occurs in a IFNG/IFN-gamma-dependent manner and inhibits JAK2 autophosphorylation activity. Interacts (via C2 domain) with GSK3B; the interaction stimulates GSK3B kinase activation. Interacts (via C2 domain) with PPP2CA. Interacts (via proline-rich motif) with a regulatory p85 subunit (via SH3 domain) of the PI3K complex; the interaction inhibits the PI3K-AKT complex activity in a TNF-alpha-dependent manner in prostate cancer (PCa) cells. Interacts with AKT1; the interaction is increased in a TNF-alpha-induced manner. Interacts (via C2 domain and active form preferentially) with KDR/VEGFR2 (tyrosine-phosphorylated active form preferentially); the interaction occurs at the late phase of VEGFA response and inhibits KDR/VEGFR2 activity. Interacts (via N-terminus C2 domain) with MAP3K5 ('Ser-966' dephosphorylated form preferentially); the interaction occurs in a TNF-alpha-induced manner. Interacts (via Ras-GAP domain) with the catalytic subunit of protein phosphatase PP2A; the interaction occurs in resting endothelial cells, is further enhanced by TNF-alpha stimulation and is required to bridge PP2A to MAP3K5. Interacts (via C-terminus PER domain) with TRAF2 (via zinc fingers); the interaction occurs in a TNF-alpha-dependent manner. Interacts with 14-3-3 proteins; the interaction occurs in a TNF-alpha-dependent manner. Interacts (via Ras-GAP domain) with RIPK1 (via kinase domain); the interaction occurs in a TNF-alpha-dependent manner. Interacts (via PH domain) with ERN1. Interacts with TRAF2. Interacts (via NPXY motif) with DAB2 (via PID domain). Interacts with RAB40C; acts as a GAP for RAB40C. In terms of processing, in response to TNF-alpha-induction, phosphorylated at Ser-728; phosphorylation leads to a conformational change, and thus, increases its association with 14-3-3 proteins, MAP3K5, RIPK1 and TRAF2 in endothelial cells; also stimulates regulatory p85 subunit sequestring and PI3K-p85 complex activity inhibition. Expressed in vascular endothelium of muscle and aorta, in smooth muscle cells of aorta and epithelial cells of lung. Expressed throughout the brain, including olfactory bulb, hypothalamus, cerebellum and cerebral cortex. Expressed in the soma and processes of neurons in a variety of brain structures, including the developing cerebral cortex, CA1 pyramidal neurons and Purkinje cells. Poorly expressed in medulloblastoma cells compared to cerebellar precursor proliferating progenitor cells (at protein level). Highly expressed in the brain, salivary gland, and testis; moderate expression in kidney and heart. Low expression in the lung, seminal vesicle, ventral prostate, epididymis, liver, and bladder. Very low expression in the coagulation gland and skeleton muscles. Lowest expression seen in spleen.

It is found in the cytoplasm. Its subcellular location is the cell membrane. It localises to the membrane. The protein resides in the cell projection. The protein localises to the dendrite. Functionally, functions as a scaffold protein implicated in the regulation of a large spectrum of both general and specialized signaling pathways. Involved in several processes such as innate immune response, inflammation and cell growth inhibition, apoptosis, cell survival, angiogenesis, cell migration and maturation. Also plays a role in cell cycle checkpoint control; reduces G1 phase cyclin levels resulting in G0/G1 cell cycle arrest. Mediates signal transduction by receptor-mediated inflammatory signals, such as the tumor necrosis factor (TNF), interferon (IFN) or lipopolysaccharide (LPS). Modulates the balance between phosphatidylinositol 3-kinase (PI3K)-AKT-mediated cell survival and apoptosis stimulated kinase (MAP3K5)-JNK signaling pathways; sequesters both AKT1 and MAP3K5 and counterbalances the activity of each kinase by modulating their phosphorylation status in response to pro-inflammatory stimuli. Acts as a regulator of the endoplasmic reticulum (ER) unfolded protein response (UPR) pathway; specifically involved in transduction of the ER stress-response to the JNK cascade through ERN1. Mediates TNF-alpha-induced apoptosis activation by facilitating dissociation of inhibitor 14-3-3 from MAP3K5; recruits the PP2A phosphatase complex which dephosphorylates MAP3K5 on 'Ser-966', leading to the dissociation of 13-3-3 proteins and activation of the MAP3K5-JNK signaling pathway in endothelial cells. Also mediates TNF/TRAF2-induced MAP3K5-JNK activation, while it inhibits CHUK-NF-kappa-B signaling. Acts a negative regulator in the IFN-gamma-mediated JAK-STAT signaling cascade by inhibiting smooth muscle cell (VSMCs) proliferation and intimal expansion, and thus, prevents graft arteriosclerosis (GA). Acts as a GTPase-activating protein (GAP) for the ADP ribosylation factor 6 (ARF6) and Ras. Promotes hydrolysis of the ARF6-bound GTP and thus, negatively regulates phosphatidylinositol 4,5-bisphosphate (PIP2)-dependent TLR4-TIRAP-MyD88 and NF-kappa-B signaling pathways in endothelial cells in response to lipopolysaccharides (LPS). Binds specifically to phosphatidylinositol 4-phosphate (PtdIns4P) and phosphatidylinositol 3-phosphate (PtdIns3P). In response to vascular endothelial growth factor (VEGFA), acts as a negative regulator of the VEGFR2-PI3K-mediated angiogenic signaling pathway by inhibiting endothelial cell migration and tube formation. In the developing brain, promotes both the transition from the multipolar to the bipolar stage and the radial migration of cortical neurons from the ventricular zone toward the superficial layer of the neocortex in a glial-dependent locomotion process. Probable downstream effector of the Reelin signaling pathway; promotes Purkinje cell (PC) dendrites development and formation of cerebellar synapses. Also functions as a tumor suppressor protein in prostate cancer progression; prevents cell proliferation and epithelial-to-mesenchymal transition (EMT) through activation of the glycogen synthase kinase-3 beta (GSK3B)-induced beta-catenin and inhibition of PI3K-AKT and Ras-MAPK survival downstream signaling cascades, respectively. This is Disabled homolog 2-interacting protein (Dab2ip) from Mus musculus (Mouse).